The following is a 148-amino-acid chain: Respiratory supercomplex factor 1, mitochondrial (148 aa).

One can recognise an HIG1 domain in the interval 9–100; it reads LPSSFDAHPE…QERKQRKEFE (92 aa). Transmembrane regions (helical) follow at residues 36 to 53 and 72 to 89; these read PLIPIGYAATSYALWRAY and IYGHAFTLFAIVAGGIYY. Residues 89–148 are a coiled coil; that stretch reads YGQERKQRKEFEKALQEKQDQEKRDAWLRELEVRDKEDKDWRQRHAAMEMAAKEAEKKMG.

This sequence belongs to the RCF1 family. In terms of assembly, associates with the respiratory chain complex III/complex IV supercomplex.

The protein localises to the mitochondrion membrane. In terms of biological role, cytochrome c oxidase subunit which plays a role in assembly of respiratory supercomplexes. The polypeptide is Respiratory supercomplex factor 1, mitochondrial (RCF1) (Ajellomyces dermatitidis (strain ER-3 / ATCC MYA-2586) (Blastomyces dermatitidis)).